Consider the following 253-residue polypeptide: Imidazole glycerol phosphate synthase subunit HisF (253 aa).

Residues D11 and D130 contribute to the active site.

This sequence belongs to the HisA/HisF family. Heterodimer of HisH and HisF.

Its subcellular location is the cytoplasm. It carries out the reaction 5-[(5-phospho-1-deoxy-D-ribulos-1-ylimino)methylamino]-1-(5-phospho-beta-D-ribosyl)imidazole-4-carboxamide + L-glutamine = D-erythro-1-(imidazol-4-yl)glycerol 3-phosphate + 5-amino-1-(5-phospho-beta-D-ribosyl)imidazole-4-carboxamide + L-glutamate + H(+). It participates in amino-acid biosynthesis; L-histidine biosynthesis; L-histidine from 5-phospho-alpha-D-ribose 1-diphosphate: step 5/9. Functionally, IGPS catalyzes the conversion of PRFAR and glutamine to IGP, AICAR and glutamate. The HisF subunit catalyzes the cyclization activity that produces IGP and AICAR from PRFAR using the ammonia provided by the HisH subunit. This is Imidazole glycerol phosphate synthase subunit HisF from Cereibacter sphaeroides (strain ATCC 17025 / ATH 2.4.3) (Rhodobacter sphaeroides).